Consider the following 322-residue polypeptide: Phosphatidylserine decarboxylase proenzyme (322 aa).

Active-site charge relay system; for autoendoproteolytic cleavage activity residues include Asp-90, His-147, and Ser-254. Residue Ser-254 is the Schiff-base intermediate with substrate; via pyruvic acid; for decarboxylase activity of the active site. Ser-254 carries the post-translational modification Pyruvic acid (Ser); by autocatalysis. Residues 290–322 (FVTPDSEPAPLPAEEIEAEHDASPLVDDKKDQV) form a disordered region. Residues 308–322 (EHDASPLVDDKKDQV) are compositionally biased toward basic and acidic residues.

Belongs to the phosphatidylserine decarboxylase family. PSD-B subfamily. Prokaryotic type I sub-subfamily. As to quaternary structure, heterodimer of a large membrane-associated beta subunit and a small pyruvoyl-containing alpha subunit. Pyruvate is required as a cofactor. Post-translationally, is synthesized initially as an inactive proenzyme. Formation of the active enzyme involves a self-maturation process in which the active site pyruvoyl group is generated from an internal serine residue via an autocatalytic post-translational modification. Two non-identical subunits are generated from the proenzyme in this reaction, and the pyruvate is formed at the N-terminus of the alpha chain, which is derived from the carboxyl end of the proenzyme. The autoendoproteolytic cleavage occurs by a canonical serine protease mechanism, in which the side chain hydroxyl group of the serine supplies its oxygen atom to form the C-terminus of the beta chain, while the remainder of the serine residue undergoes an oxidative deamination to produce ammonia and the pyruvoyl prosthetic group on the alpha chain. During this reaction, the Ser that is part of the protease active site of the proenzyme becomes the pyruvoyl prosthetic group, which constitutes an essential element of the active site of the mature decarboxylase.

The protein localises to the cell membrane. The catalysed reaction is a 1,2-diacyl-sn-glycero-3-phospho-L-serine + H(+) = a 1,2-diacyl-sn-glycero-3-phosphoethanolamine + CO2. It functions in the pathway phospholipid metabolism; phosphatidylethanolamine biosynthesis; phosphatidylethanolamine from CDP-diacylglycerol: step 2/2. Catalyzes the formation of phosphatidylethanolamine (PtdEtn) from phosphatidylserine (PtdSer). The polypeptide is Phosphatidylserine decarboxylase proenzyme (Escherichia fergusonii (strain ATCC 35469 / DSM 13698 / CCUG 18766 / IAM 14443 / JCM 21226 / LMG 7866 / NBRC 102419 / NCTC 12128 / CDC 0568-73)).